A 379-amino-acid chain; its full sequence is Glutamate 5-kinase (379 aa).

An ATP-binding site is contributed by Lys-15. Ser-56, Asp-143, and Asn-155 together coordinate substrate. Position 175–176 (175–176 (SD)) interacts with ATP. The region spanning 281–358 (KGTLTIDAGA…CDAAQILGIS (78 aa)) is the PUA domain.

The protein belongs to the glutamate 5-kinase family.

It is found in the cytoplasm. It catalyses the reaction L-glutamate + ATP = L-glutamyl 5-phosphate + ADP. The protein operates within amino-acid biosynthesis; L-proline biosynthesis; L-glutamate 5-semialdehyde from L-glutamate: step 1/2. Catalyzes the transfer of a phosphate group to glutamate to form L-glutamate 5-phosphate. The chain is Glutamate 5-kinase from Nitrobacter hamburgensis (strain DSM 10229 / NCIMB 13809 / X14).